Reading from the N-terminus, the 240-residue chain is Uridylate kinase (240 aa).

ATP is bound at residue 13–16 (KLSG). Residues 21-26 (GEKGFG) form an involved in allosteric activation by GTP region. G55 contacts UMP. G56 and R60 together coordinate ATP. Residues D75 and 136 to 143 (IGNPYFST) contribute to the UMP site. 3 residues coordinate ATP: N164, Y170, and D173.

The protein belongs to the UMP kinase family. As to quaternary structure, homohexamer.

The protein localises to the cytoplasm. The catalysed reaction is UMP + ATP = UDP + ADP. It participates in pyrimidine metabolism; CTP biosynthesis via de novo pathway; UDP from UMP (UMPK route): step 1/1. Allosterically activated by GTP. Inhibited by UTP. Its function is as follows. Catalyzes the reversible phosphorylation of UMP to UDP. This is Uridylate kinase from Staphylococcus aureus (strain USA300).